Consider the following 110-residue polypeptide: Large ribosomal subunit protein uL22 (110 aa).

This sequence belongs to the universal ribosomal protein uL22 family. As to quaternary structure, part of the 50S ribosomal subunit.

Its function is as follows. This protein binds specifically to 23S rRNA; its binding is stimulated by other ribosomal proteins, e.g. L4, L17, and L20. It is important during the early stages of 50S assembly. It makes multiple contacts with different domains of the 23S rRNA in the assembled 50S subunit and ribosome. The globular domain of the protein is located near the polypeptide exit tunnel on the outside of the subunit, while an extended beta-hairpin is found that lines the wall of the exit tunnel in the center of the 70S ribosome. The protein is Large ribosomal subunit protein uL22 of Yersinia enterocolitica serotype O:8 / biotype 1B (strain NCTC 13174 / 8081).